The following is a 308-amino-acid chain: SAP30-binding protein (308 aa).

The disordered stretch occupies residues alanine 15 to leucine 101. 4 positions are modified to phosphoserine: serine 18, serine 22, serine 43, and serine 52. Residues aspartate 57–glutamate 78 are compositionally biased toward acidic residues. The span at threonine 79–glutamine 99 shows a compositional bias: basic and acidic residues. Lysine 95 participates in a covalent cross-link: Glycyl lysine isopeptide (Lys-Gly) (interchain with G-Cter in SUMO2). The residue at position 113 (serine 113) is a Phosphoserine. Glycyl lysine isopeptide (Lys-Gly) (interchain with G-Cter in SUMO2) cross-links involve residues lysine 220, lysine 304, and lysine 305.

The protein belongs to the HCNGP family. As to quaternary structure, interacts with histone deacetylase complex subunit SAP30.

Its subcellular location is the nucleus. Plays a role in transcriptional repression by promoting histone deacetylase activity, leading to deacetylation of histone H3. May be involved in the regulation of beta-2-microglobulin genes. The chain is SAP30-binding protein (Sap30bp) from Mus musculus (Mouse).